Consider the following 202-residue polypeptide: MAKVSVLNVAVLENPSPFHSPFRFEISFECSEALADDLEWKIIYVGSAESEEFDQILDSVLVGPVPAGRHMFVFQADAPNPSLIPETDAVGVTVVLITCTYHGQEFIRVGYYVNNEYLNPELRENPPMKPDFSQLQRNILASNPRVTRFHINWDNNMDRLEAIETQDPSLGCGLPLNCTPIKGLGLPGCIPGLLPENSMDCI.

The segment at M1–N155 is interaction with CHAF1B. An interaction with histone H3 region spans residues M1–N156. S198 bears the Phosphoserine; by TLK2 mark.

The protein belongs to the ASF1 family. In terms of assembly, interacts with histone H3 (via C-terminus), including histone H3.1, H3.2 and H3.3, and histone H4; the interaction with H3 is direct. Interacts with the CHAF1A, CHAF1B and RBBP4 subunits of the CAF-1 complex. Interacts with HAT1, NASP and TAF1. Found in a soluble complex with NASP and histones H3 and H4; the interaction with NASP is probably indirect and mediated by H3-H4. Interacts with CDAN1. Found in a cytosolic complex with IPO4 and histones H3 and H4. Interacts with CREBBP. Post-translationally, phosphorylated by TLK1 and TLK2. In terms of tissue distribution, highly expressed in testis and at lower levels in colon, small intestine and thymus.

The protein resides in the nucleus. The protein localises to the cytoplasm. Its subcellular location is the cytosol. In terms of biological role, histone chaperone that facilitates histone deposition and histone exchange and removal during nucleosome assembly and disassembly. Cooperates with chromatin assembly factor 1 (CAF-1) to promote replication-dependent chromatin assembly. Also involved in the nuclear import of the histone H3-H4 dimer together with importin-4 (IPO4): specifically recognizes and binds newly synthesized histones with the monomethylation of H3 'Lys-9' (H3K9me1) and diacetylation at 'Lys-5' and 'Lys-12' of H4 (H4K5K12ac) marks in the cytosol. Does not participate in replication-independent nucleosome deposition which is mediated by ASF1A and HIRA. Required for gonad development. This is Histone chaperone ASF1B from Homo sapiens (Human).